Consider the following 200-residue polypeptide: uncharacterized protein (200 aa).

This is an uncharacterized protein from Commelina yellow mottle virus (CoYMV).